The chain runs to 880 residues: Valine--tRNA ligase (880 aa).

The 'HIGH' region motif lies at 47–57 (PNITGKLHLGH). The 'KMSKS' region signature appears at 526-530 (KMSKS). K529 contacts ATP. A coiled-coil region spans residues 810-845 (LLDLVDREKELERLNKEKTKLEGEILRVEKKLSNER).

The protein belongs to the class-I aminoacyl-tRNA synthetase family. ValS type 1 subfamily. As to quaternary structure, monomer.

It is found in the cytoplasm. It catalyses the reaction tRNA(Val) + L-valine + ATP = L-valyl-tRNA(Val) + AMP + diphosphate. Catalyzes the attachment of valine to tRNA(Val). As ValRS can inadvertently accommodate and process structurally similar amino acids such as threonine, to avoid such errors, it has a 'posttransfer' editing activity that hydrolyzes mischarged Thr-tRNA(Val) in a tRNA-dependent manner. This Clostridium perfringens (strain 13 / Type A) protein is Valine--tRNA ligase.